Reading from the N-terminus, the 316-residue chain is Galectin-8 (316 aa).

Galectin domains are found at residues 18–151 and 186–316; these read YVST…IGFR and FEAR…VRSW. The a carbohydrate site is built by Arg-68, Asn-78, and Glu-88. 248-254 contacts a beta-D-galactoside; sequence WGEEERN.

As to quaternary structure, homodimer. Interacts with CALCOCO2/NDP52. Interacts with PDPN; the interaction is glycosylation-dependent; may participate in connection of the lymphatic endothelium to the surrounding extracellular matrix. As to expression, expressed in liver, kidney, cardiac muscle, lung, and brain.

Its subcellular location is the cytoplasmic vesicle. The protein resides in the cytoplasm. It localises to the cytosol. Beta-galactoside-binding lectin that acts as a sensor of membrane damage caused by infection and restricts the proliferation of infecting pathogens by targeting them for autophagy. Detects membrane rupture by binding beta-galactoside ligands located on the lumenal side of the endosome membrane; these ligands becoming exposed to the cytoplasm following rupture. Restricts infection by initiating autophagy via interaction with CALCOCO2/NDP52. Required to restrict infection of bacterial invasion such as S.typhimurium. Also required to restrict infection of Picornaviridae viruses. Has a marked preference for 3'-O-sialylated and 3'-O-sulfated glycans. The protein is Galectin-8 (Lgals8) of Rattus norvegicus (Rat).